The sequence spans 426 residues: Dihydroorotase (426 aa).

The Zn(2+) site is built by histidine 58 and histidine 60. Residues histidine 60 to arginine 62 and asparagine 92 each bind substrate. Zn(2+) contacts are provided by aspartate 150, histidine 177, and histidine 230. Position 276 (asparagine 276) interacts with substrate. Zn(2+) is bound at residue aspartate 303. Aspartate 303 is an active-site residue. Substrate contacts are provided by residues histidine 307 and phenylalanine 321–glycine 322.

The protein belongs to the metallo-dependent hydrolases superfamily. DHOase family. Class I DHOase subfamily. It depends on Zn(2+) as a cofactor.

It carries out the reaction (S)-dihydroorotate + H2O = N-carbamoyl-L-aspartate + H(+). Its pathway is pyrimidine metabolism; UMP biosynthesis via de novo pathway; (S)-dihydroorotate from bicarbonate: step 3/3. Its function is as follows. Catalyzes the reversible cyclization of carbamoyl aspartate to dihydroorotate. The chain is Dihydroorotase from Listeria monocytogenes serovar 1/2a (strain ATCC BAA-679 / EGD-e).